Reading from the N-terminus, the 158-residue chain is UPF0725 protein At3g57210 (158 aa).

The protein belongs to the UPF0725 (EMB2204) family.

This Arabidopsis thaliana (Mouse-ear cress) protein is UPF0725 protein At3g57210.